A 325-amino-acid polypeptide reads, in one-letter code: G/U mismatch-specific uracil DNA glycosylase (325 aa).

The segment covering 1-11 (MNDIETRDTGT) has biased composition (basic and acidic residues). The tract at residues 1 to 50 (MNDIETRDTGTKNDNSSEFNLSVKSHKRKRSFDDENLELEESREETSGGI) is disordered. Polar residues predominate over residues 12-23 (KNDNSSEFNLSV). The span at 34-43 (DENLELEESR) shows a compositional bias: acidic residues.

The protein belongs to the uracil-DNA glycosylase (UDG) superfamily. TDG/mug family.

The protein resides in the nucleus. The enzyme catalyses Specifically hydrolyzes mismatched double-stranded DNA and polynucleotides, releasing free uracil.. Removes uracil from G/U mispairs in ssDNA. Also corrects G/G mispairs. Does not catalyze the removal of thymine from G/T mispairs. The protein is G/U mismatch-specific uracil DNA glycosylase (thp1) of Schizosaccharomyces pombe (strain 972 / ATCC 24843) (Fission yeast).